The primary structure comprises 77 residues: Translation initiation factor IF-1, chloroplastic (77 aa).

An S1-like domain is found at 1–72; that stretch reads MKKQNLIEME…TKGRITYRLR (72 aa).

It belongs to the IF-1 family. Component of the 30S ribosomal translation pre-initiation complex which assembles on the 30S ribosome in the order IF-2 and IF-3, IF-1 and N-formylmethionyl-tRNA(fMet); mRNA recruitment can occur at any time during PIC assembly.

It is found in the plastid. It localises to the chloroplast. Its function is as follows. One of the essential components for the initiation of protein synthesis. Stabilizes the binding of IF-2 and IF-3 on the 30S subunit to which N-formylmethionyl-tRNA(fMet) subsequently binds. Helps modulate mRNA selection, yielding the 30S pre-initiation complex (PIC). Upon addition of the 50S ribosomal subunit IF-1, IF-2 and IF-3 are released leaving the mature 70S translation initiation complex. The chain is Translation initiation factor IF-1, chloroplastic from Zygnema circumcarinatum (Green alga).